We begin with the raw amino-acid sequence, 217 residues long: Homologous-pairing protein 2 homolog (217 aa).

Positions 84 to 152 (ADLHGLDASI…RLKNIKAATN (69 aa)) form a coiled coil. Residues 118–182 (TSALTTPEMQ…WRKRKRMTTE (65 aa)) are DNA-binding.

This sequence belongs to the HOP2 family. In terms of assembly, interacts with the DNA-binding domain of the nuclear receptors NR3C1/GR, ESR2/ER-beta, THRB and RXRA. Forms a stable heterodimer with MND1. Interacts with PSMC3/TBP1. In terms of processing, phosphorylated by PKA, PKC and MAPK. In terms of tissue distribution, highly expressed in testis and more specifically in spermatocytes. Detected in spleen, ovary and thymus.

It localises to the nucleus. Functionally, plays an important role in meiotic recombination. Stimulates DMC1-mediated strand exchange required for pairing homologous chromosomes during meiosis. The complex PSMC3IP/MND1 binds DNA, stimulates the recombinase activity of DMC1 as well as DMC1 D-loop formation from double-strand DNA. This complex stabilizes presynaptic RAD51 and DMC1 filaments formed on single strand DNA to capture double-strand DNA. This complex stimulates both synaptic and presynaptic critical steps in RAD51 and DMC1-promoted homologous pairing. May inhibit HIV-1 viral protein TAT activity and modulate the activity of proteasomes through association with PSMC3. The chain is Homologous-pairing protein 2 homolog (Psmc3ip) from Mus musculus (Mouse).